Reading from the N-terminus, the 277-residue chain is Phosphate import ATP-binding protein PstB (277 aa).

The ABC transporter domain maps to 31 to 272 (IEVPGLSLFY…PAKKQTEDYI (242 aa)). 63–70 (GPSGCGKS) is an ATP binding site.

Belongs to the ABC transporter superfamily. Phosphate importer (TC 3.A.1.7) family. In terms of assembly, the complex is composed of two ATP-binding proteins (PstB), two transmembrane proteins (PstC and PstA) and a solute-binding protein (PstS).

The protein resides in the cell inner membrane. It carries out the reaction phosphate(out) + ATP + H2O = ADP + 2 phosphate(in) + H(+). Part of the ABC transporter complex PstSACB involved in phosphate import. Responsible for energy coupling to the transport system. This is Phosphate import ATP-binding protein PstB from Pseudomonas fluorescens (strain Pf0-1).